A 422-amino-acid chain; its full sequence is Serine hydroxymethyltransferase (422 aa).

Residues L119 and 123 to 125 (GHL) each bind (6S)-5,6,7,8-tetrahydrofolate. K228 is modified (N6-(pyridoxal phosphate)lysine). Residues E244 and 352–354 (SPF) each bind (6S)-5,6,7,8-tetrahydrofolate.

The protein belongs to the SHMT family. As to quaternary structure, homodimer. The cofactor is pyridoxal 5'-phosphate.

Its subcellular location is the cytoplasm. It carries out the reaction (6R)-5,10-methylene-5,6,7,8-tetrahydrofolate + glycine + H2O = (6S)-5,6,7,8-tetrahydrofolate + L-serine. It functions in the pathway one-carbon metabolism; tetrahydrofolate interconversion. It participates in amino-acid biosynthesis; glycine biosynthesis; glycine from L-serine: step 1/1. Functionally, catalyzes the reversible interconversion of serine and glycine with tetrahydrofolate (THF) serving as the one-carbon carrier. This reaction serves as the major source of one-carbon groups required for the biosynthesis of purines, thymidylate, methionine, and other important biomolecules. Also exhibits THF-independent aldolase activity toward beta-hydroxyamino acids, producing glycine and aldehydes, via a retro-aldol mechanism. The polypeptide is Serine hydroxymethyltransferase (Magnetococcus marinus (strain ATCC BAA-1437 / JCM 17883 / MC-1)).